We begin with the raw amino-acid sequence, 95 residues long: MTKSDLIERLTSKHFQLSVKEVEDSVKETLTLMANSLAQGERIEVRGFGSFSLHYRAPRVGRNPKTGDRVELDGKYVPHFKPGKALRERVNAANA.

The protein belongs to the bacterial histone-like protein family. In terms of assembly, heterodimer of an alpha and a beta chain.

This protein is one of the two subunits of integration host factor, a specific DNA-binding protein that functions in genetic recombination as well as in transcriptional and translational control. This Psychromonas ingrahamii (strain DSM 17664 / CCUG 51855 / 37) protein is Integration host factor subunit beta.